The chain runs to 61 residues: Probradykinin-2 (61 aa).

An N-terminal signal peptide occupies residues 1 to 22 (MSFLKKSLFLVLFLGLVSFSIC). Positions 23–50 (EEEKRETEEEENEDEIEEQSEEKKRFEP) are excised as a propeptide. Residues 24–61 (EEKRETEEEENEDEIEEQSEEKKRFEPVPPGFTPFRQT) are disordered. The span at 30–42 (EEEENEDEIEEQS) shows a compositional bias: acidic residues. A 4-hydroxyproline modification is found at proline 52.

The protein belongs to the frog skin active peptide (FSAP) family. Bradykinin-related peptide subfamily. In terms of tissue distribution, expressed by the skin glands.

It is found in the secreted. May produce in vitro relaxation of rat arterial smooth muscle and constriction of intestinal smooth muscle. May target bradykinin receptors (BDKRB). This Pithecopus azureus (Orange-legged monkey tree frog) protein is Probradykinin-2.